We begin with the raw amino-acid sequence, 142 residues long: Baculoviral IAP repeat-containing protein 5 (142 aa).

Residues 18-88 (RVSTFKNWPF…KHSSGCAFLS (71 aa)) form a BIR repeat. Ser20 is subject to Phosphoserine; by AURKC. Residue Lys23 is modified to N6-acetyllysine. A Phosphothreonine; by CDK1 and CDK15 modification is found at Thr34. Thr48 is subject to Phosphothreonine. Zn(2+)-binding residues include Cys57, Cys60, His77, and Cys84. 4 positions are modified to N6-acetyllysine: Lys90, Lys110, Lys112, and Lys115. Position 117 is a phosphothreonine; by AURKB (Thr117). Lys129 bears the N6-acetyllysine mark.

Belongs to the IAP family. As to quaternary structure, monomer or homodimer. Exists as a homodimer in the apo state and as a monomer in the CPC-bound state. The monomer protects cells against apoptosis more efficiently than the dimer. Only the dimeric form is capable of enhancing tubulin stability in cells. When phosphorylated, interacts with LAMTOR5/HBXIP; the resulting complex binds pro-CASP9, as well as active CASP9, but much less efficiently. Component of the chromosomal passenger complex (CPC) composed of at least BIRC5/survivin, CDCA8/borealin, INCENP, AURKB or AURKC; in the complex forms a triple-helix bundle-based subcomplex with INCENP and CDCA8. Interacts with JTB. Interacts (via BIR domain) with histone H3 phosphorylated at 'Thr-3' (H3pT3). Interacts with EVI5. Interacts with GTP-bound RAN in both the S and M phases of the cell cycle. Interacts with USP9X. Interacts with tubulin. Interacts with BIRC2/c-IAP1. The acetylated form at Lys-129 interacts with STAT3. The monomeric form deacetylated at Lys-129 interacts with XPO1/CRM1. The monomeric form interacts with XIAP/BIRC4. Both the dimeric and monomeric form can interact with DIABLO/SMAC. Interacts with BIRC6/bruce. Interacts with FBXL7; this interaction facilitates the polyubiquitination and subsequent proteasomal degradation of BIRC5 by the SCF(FBXL7) E3 ubiquitin-protein ligase complex. In terms of processing, ubiquitinated by the Cul9-RING ubiquitin-protein ligase complex, leading to its degradation. Ubiquitination is required for centrosomal targeting. Deubiquitinated by USP35 or USP38; leading to stabilization. Acetylation at Lys-129 results in its homodimerization, while deacetylation promotes the formation of monomers which heterodimerize with XPO1/CRM1 which facilitates its nuclear export. The acetylated form represses STAT3 transactivation. The dynamic equilibrium between its acetylation and deacetylation at Lys-129 determines its interaction with XPO1/CRM1, its subsequent subcellular localization, and its ability to inhibit STAT3 transactivation. Post-translationally, in vitro phosphorylation at Thr-117 by AURKB prevents interaction with INCENP and localization to mitotic chromosomes. Phosphorylation at Thr-48 by CK2 is critical for its mitotic and anti-apoptotic activities. Phosphorylation at Thr-34 by CDK15 is critical for its anti-apoptotic activity. Phosphorylation at Ser-20 by AURKC is critical for regulation of proper chromosome alignment and segregation, and possibly cytokinesis.

The protein localises to the cytoplasm. It is found in the nucleus. Its subcellular location is the chromosome. It localises to the centromere. The protein resides in the cytoskeleton. The protein localises to the spindle. It is found in the kinetochore. Its subcellular location is the midbody. Its function is as follows. Multitasking protein that has dual roles in promoting cell proliferation and preventing apoptosis. Component of a chromosome passage protein complex (CPC) which is essential for chromosome alignment and segregation during mitosis and cytokinesis. Acts as an important regulator of the localization of this complex; directs CPC movement to different locations from the inner centromere during prometaphase to midbody during cytokinesis and participates in the organization of the center spindle by associating with polymerized microtubules. Involved in the recruitment of CPC to centromeres during early mitosis via association with histone H3 phosphorylated at 'Thr-3' (H3pT3) during mitosis. The complex with RAN plays a role in mitotic spindle formation by serving as a physical scaffold to help deliver the RAN effector molecule TPX2 to microtubules. May counteract a default induction of apoptosis in G2/M phase. The acetylated form represses STAT3 transactivation of target gene promoters. May play a role in neoplasia. Inhibitor of CASP3 and CASP7. Essential for the maintenance of mitochondrial integrity and function. This chain is Baculoviral IAP repeat-containing protein 5 (BIRC5), found in Canis lupus familiaris (Dog).